The primary structure comprises 864 residues: Probable M1 family aminopeptidase 2 (864 aa).

Substrate contacts are provided by residues Glu-149 and 289–293 (GAMEN). His-325 contributes to the Zn(2+) binding site. The Proton acceptor role is filled by Glu-326. Zn(2+) contacts are provided by His-329 and Glu-348.

The protein belongs to the peptidase M1 family. Zn(2+) is required as a cofactor.

This chain is Probable M1 family aminopeptidase 2, found in Encephalitozoon cuniculi (strain GB-M1) (Microsporidian parasite).